A 149-amino-acid chain; its full sequence is MKPLILVLNGPNLNMLGTREPAQYGHETLADLAQGCADTAHAHGLEIEFRQTNHEGELIDWIHAARGRCAGIVINPGAWTHTSVAIRDALVASELPVIEVHLSNVHKREPFRHLSFVSSIAVGVICGLGSHGYRMALSHFAELLQERAA.

Tyr24 acts as the Proton acceptor in catalysis. Residues Asn75, His81, and Asp88 each contribute to the substrate site. His101 (proton donor) is an active-site residue. Substrate is bound by residues 102 to 103 and Arg112; that span reads LS.

This sequence belongs to the type-II 3-dehydroquinase family. As to quaternary structure, homododecamer.

It catalyses the reaction 3-dehydroquinate = 3-dehydroshikimate + H2O. The protein operates within metabolic intermediate biosynthesis; chorismate biosynthesis; chorismate from D-erythrose 4-phosphate and phosphoenolpyruvate: step 3/7. Its function is as follows. Catalyzes a trans-dehydration via an enolate intermediate. This chain is 3-dehydroquinate dehydratase 2 (aroQ2), found in Pseudomonas putida (strain ATCC 47054 / DSM 6125 / CFBP 8728 / NCIMB 11950 / KT2440).